The chain runs to 35 residues: GCRYMFGDCEKDEDCCKHLGCKRKMKYCAWDFTFT.

3 cysteine pairs are disulfide-bonded: Cys2-Cys16, Cys9-Cys21, and Cys15-Cys28.

The protein belongs to the neurotoxin 10 (Hwtx-1) family. 28 (Jztx-11) subfamily. In terms of tissue distribution, expressed by the venom gland.

The protein resides in the secreted. Gating-modifier toxin that targets voltage-gated sodium channels with a preferential activity on Nav1.7/SCN9A. On Nav1.7/SCN9A, the toxin acts by shifting the voltage-dependence of activation to more depolarized potentials, whereas it does not cause significant effect on the voltage-dependence of activation on other sodium channels. Minor effects are observed on the voltage-dependence of steady-state fast inactivation for all sodium channels tested (Nav1.1/SCN1A-Nav1.8/SCN10A). By testing the toxin on channel chimera, it has been shown to interact with the S3-S4 linkers in DII and DIV domains of Nav1.7/SCN9A. In vivo, the toxin dose-dependently reduces OD1-induced spontaneous pain behaviors. This Pamphobeteus nigricolor (Giant blue bloom tarantula) protein is Mu-theraphotoxin-Pn3b.